Consider the following 161-residue polypeptide: uncharacterized protein (161 aa).

To M.thermoautotrophicum MTH862.

This is an uncharacterized protein from Methanocaldococcus jannaschii (strain ATCC 43067 / DSM 2661 / JAL-1 / JCM 10045 / NBRC 100440) (Methanococcus jannaschii).